The sequence spans 598 residues: Polypeptide N-acetylgalactosaminyltransferase 17 (598 aa).

Residues 1–6 (MASLRR) lie on the Cytoplasmic side of the membrane. A helical; Signal-anchor for type II membrane protein membrane pass occupies residues 7-27 (VKVLLVLNLIAVAGFVLFLAK). The Lumenal segment spans residues 28 to 598 (CRPIAVRSGD…QRWTIKNSIK (571 aa)). A glycan (N-linked (GlcNAc...) asparagine) is linked at Asn-50. Cystine bridges form between Cys-142–Cys-373 and Cys-364–Cys-443. Positions 151–262 (LPQISIIFIF…AGWAEPVLSR (112 aa)) are catalytic subdomain A. The substrate site is built by Asp-192 and Arg-223. 3 residues coordinate Mn(2+): Asp-246, His-248, and His-378. The segment at 319–381 (PIRTPAMIGC…PCSRVAHIER (63 aa)) is catalytic subdomain B. The substrate site is built by Arg-381 and Tyr-386. 2 N-linked (GlcNAc...) asparagine glycosylation sites follow: Asn-461 and Asn-486. The region spanning 465–594 (AYGELRNNKA…SCTGQRWTIK (130 aa)) is the Ricin B-type lectin domain. 3 cysteine pairs are disulfide-bonded: Cys-478–Cys-494, Cys-526–Cys-541, and Cys-568–Cys-586.

Belongs to the glycosyltransferase 2 family. GalNAc-T subfamily. The cofactor is Mn(2+). In terms of tissue distribution, highly expressed in brain and heart. Weakly expressed in kidney, liver, lung and spleen.

It localises to the golgi apparatus membrane. It catalyses the reaction L-seryl-[protein] + UDP-N-acetyl-alpha-D-galactosamine = a 3-O-[N-acetyl-alpha-D-galactosaminyl]-L-seryl-[protein] + UDP + H(+). The enzyme catalyses L-threonyl-[protein] + UDP-N-acetyl-alpha-D-galactosamine = a 3-O-[N-acetyl-alpha-D-galactosaminyl]-L-threonyl-[protein] + UDP + H(+). It functions in the pathway protein modification; protein glycosylation. Functionally, may catalyze the initial reaction in O-linked oligosaccharide biosynthesis, the transfer of an N-acetyl-D-galactosamine residue to a serine or threonine residue on the protein receptor. This Homo sapiens (Human) protein is Polypeptide N-acetylgalactosaminyltransferase 17.